A 308-amino-acid polypeptide reads, in one-letter code: D-alanine--D-alanine ligase (308 aa).

Residues 109 to 302 form the ATP-grasp domain; the sequence is KAAYAAAGLP…FGALCRWIVE (194 aa). 136 to 186 lines the ATP pocket; it reads MPPPYVIKPYNEGSSVGVYLVPEGAEAAPELADDLPDTLMVEAFVPGRELT. Positions 253, 269, and 271 each coordinate Mg(2+).

This sequence belongs to the D-alanine--D-alanine ligase family. Requires Mg(2+) as cofactor. It depends on Mn(2+) as a cofactor.

It localises to the cytoplasm. The enzyme catalyses 2 D-alanine + ATP = D-alanyl-D-alanine + ADP + phosphate + H(+). The protein operates within cell wall biogenesis; peptidoglycan biosynthesis. Its function is as follows. Cell wall formation. In Dinoroseobacter shibae (strain DSM 16493 / NCIMB 14021 / DFL 12), this protein is D-alanine--D-alanine ligase.